Consider the following 111-residue polypeptide: Probable 4-amino-4-deoxy-L-arabinose-phosphoundecaprenol flippase subunit ArnE (111 aa).

The next 3 helical transmembrane spans lie at 38 to 58, 61 to 81, and 91 to 111; these read LWLG…LLVL, LPVG…TLAA, and PRHW…GSAA. In terms of domain architecture, EamA spans 40-109; that stretch reads LGLALICMGA…IISGIIILGS (70 aa).

The protein belongs to the ArnE family. As to quaternary structure, heterodimer of ArnE and ArnF.

The protein localises to the cell inner membrane. It functions in the pathway bacterial outer membrane biogenesis; lipopolysaccharide biosynthesis. Translocates 4-amino-4-deoxy-L-arabinose-phosphoundecaprenol (alpha-L-Ara4N-phosphoundecaprenol) from the cytoplasmic to the periplasmic side of the inner membrane. The protein is Probable 4-amino-4-deoxy-L-arabinose-phosphoundecaprenol flippase subunit ArnE of Salmonella paratyphi B (strain ATCC BAA-1250 / SPB7).